Here is a 274-residue protein sequence, read N- to C-terminus: Malonyl-[acyl-carrier protein] O-methyltransferase (274 aa).

It belongs to the methyltransferase superfamily.

The enzyme catalyses malonyl-[ACP] + S-adenosyl-L-methionine = malonyl-[ACP] methyl ester + S-adenosyl-L-homocysteine. It participates in cofactor biosynthesis; biotin biosynthesis. In terms of biological role, converts the free carboxyl group of a malonyl-thioester to its methyl ester by transfer of a methyl group from S-adenosyl-L-methionine (SAM). It allows to synthesize pimeloyl-ACP via the fatty acid synthetic pathway. The polypeptide is Malonyl-[acyl-carrier protein] O-methyltransferase (Bacteroides helcogenes (strain ATCC 35417 / DSM 20613 / JCM 6297 / CCUG 15421 / P 36-108)).